We begin with the raw amino-acid sequence, 69 residues long: DNA gyrase inhibitor YacG (69 aa).

Residues Cys13, Cys16, Cys32, and Cys36 each contribute to the Zn(2+) site.

This sequence belongs to the DNA gyrase inhibitor YacG family. As to quaternary structure, interacts with GyrB. The cofactor is Zn(2+).

In terms of biological role, inhibits all the catalytic activities of DNA gyrase by preventing its interaction with DNA. Acts by binding directly to the C-terminal domain of GyrB, which probably disrupts DNA binding by the gyrase. The chain is DNA gyrase inhibitor YacG from Neisseria meningitidis serogroup A / serotype 4A (strain DSM 15465 / Z2491).